We begin with the raw amino-acid sequence, 641 residues long: MTDSTIPGLLARIQRPTDVAGLSADDLRTLAADLRTAIIDTVSKNGGHLAPSLGVVELTLAMLSTFDPGKDKVVWDVGHQAYAWKLLTGRAADFHTLRRRHGISGFPKPCESEYDHFGVGHSSTSISAALGMALARDLAGDDHHVVAVIGDGSLTAGLAFEGLNQAGDMGRRLIVILNDNEMSISRNVGALSLFLSRNLSKGWARRVKRDVETALKSIPGIGDEMVAYAKRSEHSLKSFFTPGMLFEAFQFNYIGPVDGHDVKALVRNLELAKTNDRPVLLHVLTRKGKGYTPAEANPAFFHGVGRFEPETGRARKPGDTPVLPTYTDVFGETLCRLADMDERIVAITAAMPEGTGTNCFRERHPDRFVDVGICEQHAVTFAAGLAIQGYRPFVAIYSTFLQRSYDQIVHDVCIQKLPVVLCLDRAGLVGEDGPTHHGAFDLSFLRHIPHMSIIAPRDEADLQAAMYTALHLDAPLAIRYPRGVGFGIPLAESPSPLPVGVGEVLKEGEGVAVIAVGSRVHPSLEAAERLAEETGRHATVFDARWVKPLPEAQLLDIVARHDALLFVEENALAGGFSSAVLELLADRNALSGKHIRRIGLPDEFVEQGTQKELRVSLGLCMDGVGKALKELFAAVGNATAS.

Thiamine diphosphate is bound by residues histidine 79 and 120–122; that span reads GHS. Aspartate 151 contributes to the Mg(2+) binding site. Thiamine diphosphate is bound by residues 152 to 153, asparagine 180, tyrosine 291, and glutamate 375; that span reads GS. Residue asparagine 180 coordinates Mg(2+).

This sequence belongs to the transketolase family. DXPS subfamily. As to quaternary structure, homodimer. The cofactor is Mg(2+). It depends on thiamine diphosphate as a cofactor.

It catalyses the reaction D-glyceraldehyde 3-phosphate + pyruvate + H(+) = 1-deoxy-D-xylulose 5-phosphate + CO2. It functions in the pathway metabolic intermediate biosynthesis; 1-deoxy-D-xylulose 5-phosphate biosynthesis; 1-deoxy-D-xylulose 5-phosphate from D-glyceraldehyde 3-phosphate and pyruvate: step 1/1. Functionally, catalyzes the acyloin condensation reaction between C atoms 2 and 3 of pyruvate and glyceraldehyde 3-phosphate to yield 1-deoxy-D-xylulose-5-phosphate (DXP). This chain is 1-deoxy-D-xylulose-5-phosphate synthase, found in Nitratidesulfovibrio vulgaris (strain ATCC 29579 / DSM 644 / CCUG 34227 / NCIMB 8303 / VKM B-1760 / Hildenborough) (Desulfovibrio vulgaris).